The primary structure comprises 484 residues: L-amino-acid oxidase (484 aa).

A disulfide bond links Cys-8 and Cys-171. Residues 41-42 (MS), 61-62 (EA), and Arg-69 each bind FAD. A Zn(2+)-binding site is contributed by His-73. 85-88 (GPMR) is an FAD binding site. Substrate is bound at residue Arg-88. A glycan (N-linked (GlcNAc...) asparagine) is linked at Asn-170. Position 221 (His-221) interacts with substrate. Val-259 serves as a coordination point for FAD. Glu-277 serves as a coordination point for Zn(2+). Cys-329 and Cys-410 form a disulfide bridge. Tyr-370 serves as a coordination point for substrate. FAD contacts are provided by residues Glu-455 and 462-467 (GWIDST). 462–463 (GW) is a binding site for substrate.

It belongs to the flavin monoamine oxidase family. FIG1 subfamily. As to quaternary structure, homodimer; non-covalently linked. FAD is required as a cofactor. In terms of tissue distribution, expressed by the venom gland.

It localises to the secreted. It carries out the reaction an L-alpha-amino acid + O2 + H2O = a 2-oxocarboxylate + H2O2 + NH4(+). In terms of biological role, catalyzes an oxidative deamination of predominantly hydrophobic and aromatic L-amino acids, thus producing hydrogen peroxide that may contribute to the diverse toxic effects of this enzyme. Exhibits diverse biological activities, such as hemorrhage, hemolysis, edema, apoptosis of vascular endothelial cells or tumor cell lines, antibacterial and antiparasitic activities, as well as regulation of platelet aggregation. Effects of snake L-amino oxidases on platelets are controversial, since they either induce aggregation or inhibit agonist-induced aggregation. These different effects are probably due to different experimental conditions. This is L-amino-acid oxidase from Vipera ammodytes ammodytes (Western sand viper).